A 131-amino-acid chain; its full sequence is Histone H2A-beta (131 aa).

An N-acetylserine modification is found at Ser2. N6-acetyllysine occurs at positions 5 and 9. Gln106 carries the post-translational modification N5-methylglutamine. Phosphoserine is present on Ser128. The [ST]-Q motif motif lies at 128–129 (SQ).

It belongs to the histone H2A family. In terms of assembly, the nucleosome is a histone octamer containing two molecules each of H2A, H2B, H3 and H4 assembled in one H3-H4 heterotetramer and two H2A-H2B heterodimers. The octamer wraps approximately 147 bp of DNA. Phosphorylated to form H2AS128ph (gamma-H2A) in response to DNA double-strand breaks (DSBs) generated by exogenous genotoxic agents and by stalled replication forks. Phosphorylation is dependent on the DNA damage checkpoint kinases rad3/ATR and tel1/ATM, spreads on either side of a detected DSB site and may mark the surrounding chromatin for recruitment of proteins required for DNA damage signaling and repair. Gamma-H2A is required for recruiting crb2, a modulator of DNA damage checkpoint signaling, to DSB sites. Gamma-H2A is removed from the DNA prior to the strand invasion-primer extension step of the repair process and subsequently dephosphorylated. Dephosphorylation is necessary for efficient recovery from the DNA damage checkpoint. In terms of processing, acetylated by esa1 to form H2AK4ac and H2AK7ac.

Its subcellular location is the nucleus. The protein localises to the chromosome. Functionally, core component of nucleosome which plays a central role in DNA double strand break (DSB) repair. Nucleosomes wrap and compact DNA into chromatin, limiting DNA accessibility to the cellular machineries which require DNA as a template. Histones thereby play a central role in transcription regulation, DNA repair, DNA replication and chromosomal stability. DNA accessibility is regulated via a complex set of post-translational modifications of histones, also called histone code, and nucleosome remodeling. The chain is Histone H2A-beta (hta2) from Schizosaccharomyces pombe (strain 972 / ATCC 24843) (Fission yeast).